Here is a 226-residue protein sequence, read N- to C-terminus: Thymocyte nuclear protein 1 (226 aa).

Positions 1 to 38 (MPRPRKRQTGTAGPDRKKLSGKRTKTENSESTSVKLEN) are disordered. The short motif at 5–10 (RKRQTG) is the Nuclear localization signal element. A compositionally biased stretch (basic and acidic residues) spans 14–28 (PDRKKLSGKRTKTEN). Over residues 29–38 (SESTSVKLEN) the composition is skewed to polar residues.

Phosphorylated. In terms of tissue distribution, expressed in the medulla containing mature thymocytes, but not the cortex having immature thymocytes (at protein level). Abundant expression seen in testis, liver, brain and kidney with lower levels of the expression in thymus, spleen, heart and stomach.

Its subcellular location is the nucleus. In terms of biological role, specifically binds 5-hydroxymethylcytosine (5hmC), suggesting that it acts as a specific reader of 5hmC. This is Thymocyte nuclear protein 1 (Thyn1) from Mus musculus (Mouse).